The chain runs to 1131 residues: Chitin synthase 1 (1131 aa).

Residues M1 to P20 show a composition bias toward basic and acidic residues. A disordered region spans residues M1–Y22. Phosphoserine is present on residues S34, S35, S270, S299, and S318. A disordered region spans residues Y282–S305. Phosphothreonine is present on T328. Position 358 is a phosphoserine (S358). Helical transmembrane passes span F795–V815, V833–S853, V866–M886, I914–Q934, F942–C962, L1042–G1062, and I1101–I1121.

It belongs to the chitin synthase family.

The protein localises to the cell membrane. It carries out the reaction [(1-&gt;4)-N-acetyl-beta-D-glucosaminyl](n) + UDP-N-acetyl-alpha-D-glucosamine = [(1-&gt;4)-N-acetyl-beta-D-glucosaminyl](n+1) + UDP + H(+). Requires proteolytic activation. Polymerizes chitin, a structural polymer of the cell wall and septum, by transferring the sugar moiety of UDP-GlcNAc to the non-reducing end of the growing chitin polymer. Required for mitotic division septum formation during adverse conditions. The sequence is that of Chitin synthase 1 (CHS1) from Saccharomyces cerevisiae (strain ATCC 204508 / S288c) (Baker's yeast).